The primary structure comprises 318 residues: Protease HtpX homolog (318 aa).

The next 3 helical transmembrane spans lie at 1–21 (MLEA…VGRL), 35–55 (ILGL…GSAI), and 56–76 (AGLV…SRIV). Residue His167 participates in Zn(2+) binding. Residue Glu168 is part of the active site. His171 contributes to the Zn(2+) binding site. The next 2 helical transmembrane spans lie at 178–198 (LVMT…DPWL) and 209–229 (IAFL…LVAA). Glu235 contributes to the Zn(2+) binding site.

It belongs to the peptidase M48B family. The cofactor is Zn(2+).

The protein resides in the cell membrane. The polypeptide is Protease HtpX homolog (Methanopyrus kandleri (strain AV19 / DSM 6324 / JCM 9639 / NBRC 100938)).